The following is a 275-amino-acid chain: T cell receptor alpha chain MC.7.G5 (275 aa).

An N-terminal signal peptide occupies residues Met1–Ala21. Residues Gln22–Ser116 enclose the Ig-like V-type domain. Positions Gln22–Ser116 are t cell receptor alpha variable 38-2DV8. Cys43 and Cys112 form a disulfide bridge. A CDR1 region spans residues Thr47–Tyr53. The CDR2 stretch occupies residues Gln71 to Glu81. Asn78 carries an N-linked (GlcNAc...) asparagine glycan. The CDR3 stretch occupies residues Cys112 to Phe124. Residues Asn119 to Pro134 form a t cell receptor alpha joining 31 region. The interval Ile136–Ser275 is t cell receptor alpha constant. Positions Lys154–Thr242 constitute an Ig-like C1-type domain. Residues Cys157 and Cys207 are joined by a disulfide bond. N-linked (GlcNAc...) asparagine glycosylation is found at Asn167, Asn201, Asn212, and Asn248. The tract at residues Cys229–Ser250 is connecting peptide. Residues Val251–Trp273 traverse the membrane as a helical segment. Residues Ser274–Ser275 lie on the Cytoplasmic side of the membrane.

As to quaternary structure, disulfide-linked heterodimer with TRBV25-1*01J2S3*01C2*01 beta chain. The alpha-beta TR associates with the transmembrane signaling CD3 coreceptor proteins to form the TR-CD3 (TCR). The assembly of alpha-beta TR heterodimers with CD3 occurs in the endoplasmic reticulum where a single alpha-beta TR heterodimer associates with one CD3D-CD3E heterodimer, one CD3G-CD3E heterodimer and one CD247 homodimer forming a stable octameric structure. CD3D-CD3E and CD3G-CD3E heterodimers preferentially associate with TR alpha and TR beta chains (via TM domain), respectively. The association of the CD247 homodimer is the last step of TCR assembly in the endoplasmic reticulum and is required for transport to the cell surface. In terms of tissue distribution, expressed in MR1-restricted CD8-positive T cells.

The protein resides in the cell membrane. Its function is as follows. The alpha chain of TRAV38-2DV8*01J31*01C*01/TRBV25-1*01J2S3*01C2*01 alpha-beta T cell receptor (TR) clonotype that displays pan-cancer cell recognition via the invariant MR1 molecule. On CD8-positive T cell clone MC.7.G5, likely recognizes tumor-specific or -associated metabolite(s) essential for cancer cell survival, triggering killing of many cancer cell types including lung, melanoma, leukemia, colon, breast, prostate, bone and ovarian cancer cells. Mediates cancer cell cytotoxicity in an HLA-independent manner. Has no reactivity to healthy cells, even stressed or infected by bacteria. Antigen recognition initiates TR-CD3 clustering on the cell surface and intracellular activation of LCK that phosphorylates the ITAM motifs of CD3G, CD3D, CD3E and CD247 enabling the recruitment of ZAP70. In turn, ZAP70 phosphorylates LAT, which recruits numerous signaling molecules to form the LAT signalosome. The LAT signalosome propagates signal branching to three major signaling pathways, the calcium, the mitogen-activated protein kinase (MAPK) kinase and the nuclear factor NF-kappa-B (NF-kB) pathways, leading to the mobilization of transcription factors that are critical for gene expression and essential for T cell differentiation into effector/memory T cells. The protein is T cell receptor alpha chain MC.7.G5 of Homo sapiens (Human).